Consider the following 77-residue polypeptide: uncharacterized protein (77 aa).

This is an uncharacterized protein from Salmonella typhimurium (strain LT2 / SGSC1412 / ATCC 700720).